Reading from the N-terminus, the 64-residue chain is Large ribosomal subunit protein uL29 (64 aa).

It belongs to the universal ribosomal protein uL29 family.

The protein is Large ribosomal subunit protein uL29 of Acaryochloris marina (strain MBIC 11017).